A 435-amino-acid polypeptide reads, in one-letter code: Xylose isomerase (435 aa).

Active-site residues include His-100 and Asp-103. Glu-231, Glu-267, His-270, Asp-295, Asp-306, Asp-308, and Asp-338 together coordinate Mg(2+).

This sequence belongs to the xylose isomerase family. Homotetramer. The cofactor is Mg(2+).

The protein resides in the cytoplasm. The catalysed reaction is alpha-D-xylose = alpha-D-xylulofuranose. The polypeptide is Xylose isomerase (Brucella ovis (strain ATCC 25840 / 63/290 / NCTC 10512)).